The following is a 796-amino-acid chain: Vacuolar protein sorting-associated protein 35 (796 aa).

Residue serine 7 is modified to Phosphoserine. 2 interaction with SNX3 regions span residues 25 to 44 (VQSF…DALK) and 205 to 215 (DREKRERERQE). The tract at residues 438 to 796 (CYVLSNVLDY…EGPIYEGLIL (359 aa)) is interaction with SLC11A2. An interaction with IGF2R cytoplasmic domain region spans residues 500–693 (SDDPDQQYLI…DKNGEELHGG (194 aa)). The interval 776-796 (HLRSRRESPESEGPIYEGLIL) is disordered. Serine 783 is modified (phosphoserine). Residue tyrosine 791 is modified to Phosphotyrosine.

It belongs to the VPS35 family. Component of the heterotrimeric retromer cargo-selective complex (CSC), also described as vacuolar protein sorting subcomplex (VPS) formed by VPS26 (VPS26A or VPS26B), VPS29 and VPS35. The CSC has a highly elongated structure with VPS26 and VPS29 binding independently at opposite distal ends of VPS35 as central platform. The CSC is believed to associate with variable sorting nexins to form functionally distinct retromer complex variants. The originally described retromer complex (also called SNX-BAR retromer) is a pentamer containing the CSC and a heterodimeric membrane-deforming subcomplex formed between SNX1 or SNX2 and SNX5 or SNX6 (also called SNX-BAR subcomplex); the affinity between the respective CSC and SNX-BAR subcomplexes is low. The CSC associates with SNX3 to form a SNX3-retromer complex. The CSC associates with SNX27, the WASH complex and the SNX-BAR subcomplex to form the SNX27-retromer complex. Interacts with VPS26A, VPS29, VPS26B and LRRK2. Interacts with SNX1, SNX2, IGF2R, SNX3, GOLPH3, SLC11A2, WASHC2, FKBP15, WASHC1, EHD1. Interacts with MAGEL2; leading to recruitment of the TRIM27:MAGEL2 E3 ubiquitin ligase complex retromer-containing endosomes. Interacts with SORCS2. Detected in striatum (at protein level). Ubiquitous. Highly expressed in fat tissue, testis, brain, kidney, thymus, liver and pancreas, and at lower levels in heart, intestine and skeletal muscle. Detected in oocytes, pre-implantation embryos and at 6.5-12.5 dpc.

The protein localises to the cytoplasm. It is found in the membrane. It localises to the endosome. Its subcellular location is the early endosome. The protein resides in the late endosome. In terms of biological role, acts as a component of the retromer cargo-selective complex (CSC). The CSC is believed to be the core functional component of retromer or respective retromer complex variants acting to prevent missorting of selected transmembrane cargo proteins into the lysosomal degradation pathway. The recruitment of the CSC to the endosomal membrane involves RAB7A and SNX3. The CSC seems to associate with the cytoplasmic domain of cargo proteins predominantly via VPS35; however, these interactions seem to be of low affinity and retromer SNX proteins may also contribute to cargo selectivity thus questioning the classical function of the CSC. The SNX-BAR retromer mediates retrograde transport of cargo proteins from endosomes to the trans-Golgi network (TGN) and is involved in endosome-to-plasma membrane transport for cargo protein recycling. The SNX3-retromer mediates the retrograde transport of WLS distinct from the SNX-BAR retromer pathway. The SNX27-retromer is believed to be involved in endosome-to-plasma membrane trafficking and recycling of a broad spectrum of cargo proteins. The CSC seems to act as recruitment hub for other proteins, such as the WASH complex and TBC1D5. Required for retrograde transport of lysosomal enzyme receptor IGF2R and SLC11A2. Required to regulate transcytosis of the polymeric immunoglobulin receptor (pIgR-pIgA). Required for endosomal localization of WASHC2 and mediates the association of the CSC with the WASH complex. The polypeptide is Vacuolar protein sorting-associated protein 35 (Vps35) (Mus musculus (Mouse)).